The chain runs to 551 residues: Preprotein translocase subunit SCY1, chloroplastic (551 aa).

The transit peptide at Met1–Arg67 directs the protein to the chloroplast. The next 10 membrane-spanning stretches (helical) occupy residues Phe142–Gly162, Leu192–Leu212, Ala241–Val261, Trp268–Glu288, Leu295–Phe315, Tyr328–Val348, Ser382–Ala402, Phe415–Phe435, Val482–Thr502, and His503–Thr523.

It belongs to the SecY/SEC61-alpha family. In terms of assembly, part of the Sec protein translocation apparatus. Interacts with SECE1, ALB3 and probably with SECA1.

The protein resides in the plastid. It localises to the chloroplast thylakoid membrane. Involved in protein export. Probably interacts with other proteins to allow the translocation of proteins across the chloroplast thylakoid membranes. Required for normal greening during embryogenesis. Central subunit of the protein translocation channel SecYE. Consists of two halves formed by TMs 1-5 and 6-10. These two domains form a lateral gate at the front which open onto the bilayer between TMs 2 and 7, and are clamped together by SecE at the back. The channel is closed by both a pore ring composed of hydrophobic SecY resides and a short helix (helix 2A) on the extracellular side of the membrane which forms a plug. The chain is Preprotein translocase subunit SCY1, chloroplastic (SCY1) from Arabidopsis thaliana (Mouse-ear cress).